We begin with the raw amino-acid sequence, 263 residues long: Phosphate import ATP-binding protein PstB (263 aa).

The ABC transporter domain maps to 16–258 (VTARNVTVSY…PRDTRTQDYI (243 aa)). 48 to 55 (GPSGCGKS) contributes to the ATP binding site.

It belongs to the ABC transporter superfamily. Phosphate importer (TC 3.A.1.7) family. The complex is composed of two ATP-binding proteins (PstB), two transmembrane proteins (PstC and PstA) and a solute-binding protein (PstS).

It is found in the cell inner membrane. The catalysed reaction is phosphate(out) + ATP + H2O = ADP + 2 phosphate(in) + H(+). Part of the ABC transporter complex PstSACB involved in phosphate import. Responsible for energy coupling to the transport system. This chain is Phosphate import ATP-binding protein PstB, found in Maricaulis maris (strain MCS10) (Caulobacter maris).